We begin with the raw amino-acid sequence, 535 residues long: Arylsulfatase K (535 aa).

A signal peptide spans 1 to 22 (MLLLWLSVFAASALAAPDRGAG). Ca(2+) is bound by residues Asp-44 and Cys-84. Catalysis depends on Cys-84, which acts as the Nucleophile. At Cys-84 the chain carries 3-oxoalanine (Cys). Asn-112 carries an N-linked (GlcNAc...) asparagine glycan. Lys-132 contacts substrate. N-linked (GlcNAc...) asparagine glycosylation is present at Asn-197. His-255 provides a ligand contact to substrate. Asn-266 carries N-linked (GlcNAc...) asparagine glycosylation. 2 residues coordinate Ca(2+): Asp-317 and His-318. Asn-379, Asn-417, and Asn-502 each carry an N-linked (GlcNAc...) asparagine glycan.

The protein belongs to the sulfatase family. Requires Ca(2+) as cofactor. In terms of processing, the conversion to 3-oxoalanine (also known as C-formylglycine, FGly), of a serine or cysteine residue in prokaryotes and of a cysteine residue in eukaryotes, is critical for catalytic activity. The 75-kDa precursor undergoes proteolytic processing to yield a 23 kDa form. Post-translationally, N-glycosylated with both high mannose and complex type sugars.

The protein resides in the secreted. It is found in the lysosome. The catalysed reaction is an aryl sulfate + H2O = a phenol + sulfate + H(+). It carries out the reaction Hydrolysis of the 2-sulfate groups of the 2-O-sulfo-D-glucuronate residues of chondroitin sulfate, heparin and heparitin sulfate.. Catalyzes the hydrolysis of pseudosubstrates such as p-nitrocatechol sulfate and p-nitrophenyl sulfate. Catalyzes the hydrolysis of the 2-sulfate groups of the 2-O-sulfo-D-glucuronate residues of chondroitin sulfate, heparin and heparitin sulfate. Acts selectively on 2-sulfoglucuronate and lacks activity against 2-sulfoiduronate. This is Arylsulfatase K (ARSK) from Canis lupus familiaris (Dog).